The sequence spans 574 residues: Pentatricopeptide repeat-containing protein At5g25630 (574 aa).

The span at 1 to 21 shows a compositional bias: basic and acidic residues; the sequence is MEDVNQEKKKVPPMSEPERST. The segment at 1-25 is disordered; it reads MEDVNQEKKKVPPMSEPERSTPIKT. PPR repeat units lie at residues 44–78, 79–113, 114–148, 149–183, 187–221, 222–258, 259–293, 294–328, 329–363, 364–394, 398–432, and 433–467; these read TVRSRTKLMNVLIERGRPHEAQTVFKTLAETGHRP, SLISYTTLLAAMTVQKQYGSISSIVSEVEQSGTKL, DSIFFNAVINAFSESGNMEDAVQALLKMKELGLNP, TTSTYNTLIKGYGIAGKPERSSELLDLMLEEGNVD, NIRTFNVLVQAWCKKKKVEEAWEVVKKMEECGVRP, DTVTYNTIATCYVQKGETVRAESEVVEKMVMKEKAKP, NGRTCGIVVGGYCREGRVRDGLRFVRRMKEMRVEA, NLVVFNSLINGFVEVMDRDGIDEVLTLMKECNVKA, DVITYSTVMNAWSSAGYMEKAAQVFKEMVKAGVKP, DAHAYSILAKGYVRAKEPKKAEELLETLIVE, NVVIFTTVISGWCSNGSMDDAMRVFNKMCKFGVSP, and NIKTFETLMWGYLEVKQPWKAEEVLQMMRGCGVKP.

Belongs to the PPR family. P subfamily.

The chain is Pentatricopeptide repeat-containing protein At5g25630 from Arabidopsis thaliana (Mouse-ear cress).